The primary structure comprises 222 residues: ATP synthase F(0) complex subunit a (222 aa).

A run of 6 helical transmembrane segments spans residues 8 to 28 (FFYVPVGTMMLAIAFPAILLP), 64 to 84 (WSLMLITLTLFIGLTNLLGLL), 93 to 113 (QLTVNLSMAIPLWTGTVVPGF), 127 to 147 (QGTPMFLIPMIIIIETISLLI), 160 to 180 (ITAGHSLIHLTGTATLTLSSI), and 197 to 219 (ILELAVALIQAYVFALLISLYLH).

Belongs to the ATPase A chain family. As to quaternary structure, component of the ATP synthase complex composed at least of ATP5F1A/subunit alpha, ATP5F1B/subunit beta, ATP5MC1/subunit c (homooctomer), MT-ATP6/subunit a, MT-ATP8/subunit 8, ATP5ME/subunit e, ATP5MF/subunit f, ATP5MG/subunit g, ATP5MK/subunit k, ATP5MJ/subunit j, ATP5F1C/subunit gamma, ATP5F1D/subunit delta, ATP5F1E/subunit epsilon, ATP5PF/subunit F6, ATP5PB/subunit b, ATP5PD/subunit d, ATP5PO/subunit OSCP. ATP synthase complex consists of a soluble F(1) head domain (subunits alpha(3) and beta(3)) - the catalytic core - and a membrane F(0) domain - the membrane proton channel (subunits c, a, 8, e, f, g, k and j). These two domains are linked by a central stalk (subunits gamma, delta, and epsilon) rotating inside the F1 region and a stationary peripheral stalk (subunits F6, b, d, and OSCP). Interacts with DNAJC30; interaction is direct.

The protein resides in the mitochondrion inner membrane. The catalysed reaction is H(+)(in) = H(+)(out). Its function is as follows. Subunit a, of the mitochondrial membrane ATP synthase complex (F(1)F(0) ATP synthase or Complex V) that produces ATP from ADP in the presence of a proton gradient across the membrane which is generated by electron transport complexes of the respiratory chain. ATP synthase complex consist of a soluble F(1) head domain - the catalytic core - and a membrane F(1) domain - the membrane proton channel. These two domains are linked by a central stalk rotating inside the F(1) region and a stationary peripheral stalk. During catalysis, ATP synthesis in the catalytic domain of F(1) is coupled via a rotary mechanism of the central stalk subunits to proton translocation. With the subunit c (ATP5MC1), forms the proton-conducting channel in the F(0) domain, that contains two crucial half-channels (inlet and outlet) that facilitate proton movement from the mitochondrial intermembrane space (IMS) into the matrix. Protons are taken up via the inlet half-channel and released through the outlet half-channel, following a Grotthuss mechanism. In Loxodonta africana (African elephant), this protein is ATP synthase F(0) complex subunit a.